The following is a 486-amino-acid chain: MAKITQTMISQLLAAVGGSSNVSKCGNCMTRLRLTLANNGVADQAVIKQIPGVMGVVESDEQFQIILGPGKAQQAAELMNKLIESVINGDVQEQAMASDTNDLSSVAAEQKKQMKSKQTSAVQRFLSKFATIFTPLIPGFIAAGLLLGFATLLEQMFVLEQTPSQFILDLIAYMKVFGKGLFAFLSILIGYNAQQAFGGSGVNGAILASLFVLGYNPDATSGIYSGMSEFFGYTIDPRGNIIGVLLAAIIGAQVERKVREYMPDDLDMILTSVVTLLIMGVVTFVVIMPIGGELFKGMSWLFLNLNDNPLGAAILAGLFLISVVFGIHQGFVPVYFALMEAQGFNSLFPILAMAGGGQVGASLALYFKAKKDAVLRTQVKGAIIPGILGIGEPLIYGVTLPRVKPFVTACIGGAAGGFFIGLVSYLGLPVGLNTVFGPSGIVAIPLMTSHSGIFAGMAVFVVGLLISYVVGFLATYFFGSKDVDLS.

One can recognise a PTS EIIB type-1 domain in the interval 1 to 89 (MAKITQTMIS…NKLIESVING (89 aa)). Cysteine 28 functions as the Phosphocysteine intermediate; for EIIB activity in the catalytic mechanism. The 360-residue stretch at 127 to 486 (SKFATIFTPL…FFGSKDVDLS (360 aa)) folds into the PTS EIIC type-1 domain. Helical transmembrane passes span 129–149 (FATIFTPLIPGFIAAGLLLGF), 170–190 (LIAYMKVFGKGLFAFLSILIG), 196–216 (AFGGSGVNGAILASLFVLGYN), 230–250 (FFGYTIDPRGNIIGVLLAAII), 268–288 (MILTSVVTLLIMGVVTFVVIM), 312–332 (AAILAGLFLISVVFGIHQGFV), 347–367 (LFPILAMAGGGQVGASLALYF), 381–401 (GAIIPGILGIGEPLIYGVTLP), 411–431 (IGGAAGGFFIGLVSYLGLPVG), and 453–473 (IFAGMAVFVVGLLISYVVGFL).

The protein resides in the cell inner membrane. It catalyses the reaction N-acetyl-beta-D-muramate(out) + N(pros)-phospho-L-histidyl-[protein] = N-acetyl-beta-D-muramate 6-phosphate(in) + L-histidyl-[protein]. Functionally, the phosphoenolpyruvate-dependent sugar phosphotransferase system (sugar PTS), a major carbohydrate active transport system, catalyzes the phosphorylation of incoming sugar substrates concomitantly with their translocation across the cell membrane. This system is involved in N-acetylmuramic acid (MurNAc) transport, yielding cytoplasmic MurNAc-6-P. Is also able to take up anhydro-N-acetylmuramic acid (anhMurNAc), but cannot phosphorylate the carbon 6, probably because of the 1,6-anhydro ring. The protein is PTS system N-acetylmuramic acid-specific EIIBC component (murP) of Vibrio vulnificus (strain YJ016).